Reading from the N-terminus, the 697-residue chain is Methionine--tRNA ligase (697 aa).

Residues 11–21 (PYANGPIHLGH) carry the 'HIGH' region motif. Cysteine 142, cysteine 145, cysteine 155, and cysteine 158 together coordinate Zn(2+). The 'KMSKS' region motif lies at 343-347 (KMSKS). Lysine 346 lines the ATP pocket. Positions 595–697 (DFMKVEMTVA…DECKVGDKLA (103 aa)) constitute a tRNA-binding domain.

The protein belongs to the class-I aminoacyl-tRNA synthetase family. MetG type 1 subfamily. As to quaternary structure, homodimer. Requires Zn(2+) as cofactor.

Its subcellular location is the cytoplasm. The enzyme catalyses tRNA(Met) + L-methionine + ATP = L-methionyl-tRNA(Met) + AMP + diphosphate. Its function is as follows. Is required not only for elongation of protein synthesis but also for the initiation of all mRNA translation through initiator tRNA(fMet) aminoacylation. The polypeptide is Methionine--tRNA ligase (Psychrobacter sp. (strain PRwf-1)).